The chain runs to 944 residues: Bifunctional glutamine synthetase adenylyltransferase/adenylyl-removing enzyme (944 aa).

The interval 1–440 is adenylyl removase; that stretch reads MSANSVFQQL…IFTQLIGEDD (440 aa). Positions 448–944 are adenylyl transferase; sequence VSEFKRLWLL…LSSKQKWLDE (497 aa).

This sequence belongs to the GlnE family. The cofactor is Mg(2+).

It carries out the reaction [glutamine synthetase]-O(4)-(5'-adenylyl)-L-tyrosine + phosphate = [glutamine synthetase]-L-tyrosine + ADP. The enzyme catalyses [glutamine synthetase]-L-tyrosine + ATP = [glutamine synthetase]-O(4)-(5'-adenylyl)-L-tyrosine + diphosphate. Involved in the regulation of glutamine synthetase GlnA, a key enzyme in the process to assimilate ammonia. When cellular nitrogen levels are high, the C-terminal adenylyl transferase (AT) inactivates GlnA by covalent transfer of an adenylyl group from ATP to specific tyrosine residue of GlnA, thus reducing its activity. Conversely, when nitrogen levels are low, the N-terminal adenylyl removase (AR) activates GlnA by removing the adenylyl group by phosphorolysis, increasing its activity. The regulatory region of GlnE binds the signal transduction protein PII (GlnB) which indicates the nitrogen status of the cell. This is Bifunctional glutamine synthetase adenylyltransferase/adenylyl-removing enzyme from Proteus mirabilis (strain HI4320).